A 218-amino-acid chain; its full sequence is Ribosomal RNA large subunit methyltransferase E (218 aa).

Residues Gly64, Trp66, Asp92, Asp108, and Asp133 each contribute to the S-adenosyl-L-methionine site. Lys173 serves as the catalytic Proton acceptor.

The protein belongs to the class I-like SAM-binding methyltransferase superfamily. RNA methyltransferase RlmE family.

It is found in the cytoplasm. The catalysed reaction is uridine(2552) in 23S rRNA + S-adenosyl-L-methionine = 2'-O-methyluridine(2552) in 23S rRNA + S-adenosyl-L-homocysteine + H(+). Specifically methylates the uridine in position 2552 of 23S rRNA at the 2'-O position of the ribose in the fully assembled 50S ribosomal subunit. This Paracidovorax citrulli (strain AAC00-1) (Acidovorax citrulli) protein is Ribosomal RNA large subunit methyltransferase E.